The chain runs to 148 residues: Transcriptional repressor NrdR (148 aa).

Residues Met-1–Gly-22 are disordered. A zinc finger spans residues Cys-3–Cys-34. The ATP-cone domain maps to Leu-49–Arg-136.

Belongs to the NrdR family. Zn(2+) serves as cofactor.

Functionally, negatively regulates transcription of bacterial ribonucleotide reductase nrd genes and operons by binding to NrdR-boxes. In Deinococcus deserti (strain DSM 17065 / CIP 109153 / LMG 22923 / VCD115), this protein is Transcriptional repressor NrdR.